We begin with the raw amino-acid sequence, 461 residues long: Mannose-6-phosphate isomerase (461 aa).

Positions 107, 109, 134, and 291 each coordinate Zn(2+). Residue R310 is part of the active site.

The protein belongs to the mannose-6-phosphate isomerase type 1 family. Zn(2+) is required as a cofactor.

The protein resides in the cytoplasm. It catalyses the reaction D-mannose 6-phosphate = D-fructose 6-phosphate. The protein operates within nucleotide-sugar biosynthesis; GDP-alpha-D-mannose biosynthesis; alpha-D-mannose 1-phosphate from D-fructose 6-phosphate: step 1/2. Involved in the synthesis of the GDP-mannose and dolichol-phosphate-mannose required for a number of critical mannosyl transfer reactions. The chain is Mannose-6-phosphate isomerase (manA) from Emericella nidulans (strain FGSC A4 / ATCC 38163 / CBS 112.46 / NRRL 194 / M139) (Aspergillus nidulans).